The sequence spans 240 residues: Ribose-5-phosphate isomerase A (240 aa).

Substrate is bound by residues 41–44 (TGST), 94–97 (DGAD), and 107–110 (KGGG). E116 functions as the Proton acceptor in the catalytic mechanism. K134 is a binding site for substrate.

It belongs to the ribose 5-phosphate isomerase family. As to quaternary structure, homodimer.

The enzyme catalyses aldehydo-D-ribose 5-phosphate = D-ribulose 5-phosphate. It functions in the pathway carbohydrate degradation; pentose phosphate pathway; D-ribose 5-phosphate from D-ribulose 5-phosphate (non-oxidative stage): step 1/1. Its function is as follows. Catalyzes the reversible conversion of ribose-5-phosphate to ribulose 5-phosphate. The sequence is that of Ribose-5-phosphate isomerase A from Polaromonas sp. (strain JS666 / ATCC BAA-500).